We begin with the raw amino-acid sequence, 291 residues long: N-acetylmannosamine kinase (291 aa).

ATP is bound by residues 5 to 12 (AIDIGGTK) and 132 to 139 (GVGGGVVC). 4 residues coordinate Zn(2+): histidine 156, cysteine 166, cysteine 168, and cysteine 173.

It belongs to the ROK (NagC/XylR) family. NanK subfamily. Homodimer.

The catalysed reaction is an N-acyl-D-mannosamine + ATP = an N-acyl-D-mannosamine 6-phosphate + ADP + H(+). The protein operates within amino-sugar metabolism; N-acetylneuraminate degradation; D-fructose 6-phosphate from N-acetylneuraminate: step 2/5. Its function is as follows. Catalyzes the phosphorylation of N-acetylmannosamine (ManNAc) to ManNAc-6-P. The sequence is that of N-acetylmannosamine kinase from Salmonella arizonae (strain ATCC BAA-731 / CDC346-86 / RSK2980).